The sequence spans 278 residues: Thiazole synthase (278 aa).

The Schiff-base intermediate with DXP role is filled by Lys-107. 1-deoxy-D-xylulose 5-phosphate is bound by residues Gly-168, Ala-194–Gly-195, and Ala-216–Ser-217.

The protein belongs to the ThiG family. Homotetramer. Forms heterodimers with either ThiH or ThiS.

It is found in the cytoplasm. The catalysed reaction is [ThiS sulfur-carrier protein]-C-terminal-Gly-aminoethanethioate + 2-iminoacetate + 1-deoxy-D-xylulose 5-phosphate = [ThiS sulfur-carrier protein]-C-terminal Gly-Gly + 2-[(2R,5Z)-2-carboxy-4-methylthiazol-5(2H)-ylidene]ethyl phosphate + 2 H2O + H(+). Its pathway is cofactor biosynthesis; thiamine diphosphate biosynthesis. Functionally, catalyzes the rearrangement of 1-deoxy-D-xylulose 5-phosphate (DXP) to produce the thiazole phosphate moiety of thiamine. Sulfur is provided by the thiocarboxylate moiety of the carrier protein ThiS. In vitro, sulfur can be provided by H(2)S. This chain is Thiazole synthase, found in Corynebacterium urealyticum (strain ATCC 43042 / DSM 7109).